Here is an 83-residue protein sequence, read N- to C-terminus: Sulfur carrier protein TusA (83 aa).

C19 (cysteine persulfide intermediate) is an active-site residue.

The protein belongs to the sulfur carrier protein TusA family.

The protein resides in the cytoplasm. Functionally, sulfur carrier protein which probably makes part of a sulfur-relay system. This Aliivibrio salmonicida (strain LFI1238) (Vibrio salmonicida (strain LFI1238)) protein is Sulfur carrier protein TusA.